Here is a 266-residue protein sequence, read N- to C-terminus: 3-methyl-2-oxobutanoate hydroxymethyltransferase (266 aa).

Mg(2+) is bound by residues Asp45 and Asp84. 3-methyl-2-oxobutanoate contacts are provided by residues 45–46 (DS), Asp84, and Lys113. Glu115 serves as a coordination point for Mg(2+). Glu183 (proton acceptor) is an active-site residue.

This sequence belongs to the PanB family. As to quaternary structure, homodecamer; pentamer of dimers. Requires Mg(2+) as cofactor.

The protein resides in the cytoplasm. It carries out the reaction 3-methyl-2-oxobutanoate + (6R)-5,10-methylene-5,6,7,8-tetrahydrofolate + H2O = 2-dehydropantoate + (6S)-5,6,7,8-tetrahydrofolate. Its pathway is cofactor biosynthesis; (R)-pantothenate biosynthesis; (R)-pantoate from 3-methyl-2-oxobutanoate: step 1/2. Catalyzes the reversible reaction in which hydroxymethyl group from 5,10-methylenetetrahydrofolate is transferred onto alpha-ketoisovalerate to form ketopantoate. The chain is 3-methyl-2-oxobutanoate hydroxymethyltransferase from Coxiella burnetii (strain Dugway 5J108-111).